Reading from the N-terminus, the 317-residue chain is Ribosomal protein L11 methyltransferase (317 aa).

S-adenosyl-L-methionine contacts are provided by threonine 169, glycine 190, aspartate 211, and asparagine 256.

Belongs to the methyltransferase superfamily. PrmA family.

It is found in the cytoplasm. The enzyme catalyses L-lysyl-[protein] + 3 S-adenosyl-L-methionine = N(6),N(6),N(6)-trimethyl-L-lysyl-[protein] + 3 S-adenosyl-L-homocysteine + 3 H(+). Methylates ribosomal protein L11. In Helicobacter hepaticus (strain ATCC 51449 / 3B1), this protein is Ribosomal protein L11 methyltransferase.